Here is a 282-residue protein sequence, read N- to C-terminus: ABC transporter I family member 21 (282 aa).

Positions 13-248 (IRVSGMQFSY…KTSPNLLSVV (236 aa)) constitute an ABC transporter domain. 46-53 (GANGSGKT) lines the ATP pocket.

It belongs to the ABC transporter superfamily. ABCI family. As to expression, expressed in root elongating zone and root meristem, as well as in elongating etiolated hypocotyls.

The protein resides in the cytoplasm. The sequence is that of ABC transporter I family member 21 (ABCI21) from Arabidopsis thaliana (Mouse-ear cress).